A 467-amino-acid polypeptide reads, in one-letter code: Uronate isomerase (467 aa).

This sequence belongs to the metallo-dependent hydrolases superfamily. Uronate isomerase family.

The enzyme catalyses D-glucuronate = D-fructuronate. The catalysed reaction is aldehydo-D-galacturonate = keto-D-tagaturonate. Its pathway is carbohydrate metabolism; pentose and glucuronate interconversion. This chain is Uronate isomerase, found in Flavobacterium johnsoniae (strain ATCC 17061 / DSM 2064 / JCM 8514 / BCRC 14874 / CCUG 350202 / NBRC 14942 / NCIMB 11054 / UW101) (Cytophaga johnsonae).